A 92-amino-acid chain; its full sequence is Defensin-like protein 294 (92 aa).

An N-terminal signal peptide occupies residues 1-26; the sequence is MASRATSLFIFFFLISCTFMLLETNA. 3 disulfide bridges follow: C63–C82, C69–C87, and C75–C89.

The protein belongs to the DEFL family.

It localises to the secreted. The chain is Defensin-like protein 294 from Arabidopsis thaliana (Mouse-ear cress).